The chain runs to 73 residues: Alpha-bungarotoxin N3 (73 aa).

5 disulfides stabilise this stretch: Cys3-Cys23, Cys16-Cys43, Cys28-Cys32, Cys47-Cys58, and Cys59-Cys64.

This sequence belongs to the three-finger toxin family. Long-chain subfamily. Type II alpha-neurotoxin sub-subfamily. As to quaternary structure, monomer in solution, homodimer in crystal state. Expressed by the venom gland.

The protein resides in the secreted. Binds with high affinity to muscular (alpha-1/CHRNA1) and neuronal (alpha-7/CHRNA7) nicotinic acetylcholine receptor (nAChR) and inhibits acetylcholine from binding to the receptor, thereby impairing neuromuscular and neuronal transmission. Mice injected with this toxin develop flaccid paralysis followed by death. Irreversibly inhibits twitches in a concentration-dependent manner in rat phrenic nerve-hemidiaphragm and chick biventer cervicis muscle. The protein is Alpha-bungarotoxin N3 of Bungarus candidus (Malayan krait).